The primary structure comprises 412 residues: Multifunctional CCA protein (412 aa).

ATP-binding residues include Gly8 and Arg11. Residues Gly8 and Arg11 each contribute to the CTP site. Mg(2+) is bound by residues Asp21 and Asp23. Arg91, Arg137, and Arg140 together coordinate ATP. 3 residues coordinate CTP: Arg91, Arg137, and Arg140. An HD domain is found at Thr228–Trp329.

The protein belongs to the tRNA nucleotidyltransferase/poly(A) polymerase family. Bacterial CCA-adding enzyme type 1 subfamily. In terms of assembly, monomer. Can also form homodimers and oligomers. It depends on Mg(2+) as a cofactor. The cofactor is Ni(2+).

The catalysed reaction is a tRNA precursor + 2 CTP + ATP = a tRNA with a 3' CCA end + 3 diphosphate. It catalyses the reaction a tRNA with a 3' CCA end + 2 CTP + ATP = a tRNA with a 3' CCACCA end + 3 diphosphate. In terms of biological role, catalyzes the addition and repair of the essential 3'-terminal CCA sequence in tRNAs without using a nucleic acid template. Adds these three nucleotides in the order of C, C, and A to the tRNA nucleotide-73, using CTP and ATP as substrates and producing inorganic pyrophosphate. tRNA 3'-terminal CCA addition is required both for tRNA processing and repair. Also involved in tRNA surveillance by mediating tandem CCA addition to generate a CCACCA at the 3' terminus of unstable tRNAs. While stable tRNAs receive only 3'-terminal CCA, unstable tRNAs are marked with CCACCA and rapidly degraded. This is Multifunctional CCA protein from Escherichia coli O157:H7.